Here is a 418-residue protein sequence, read N- to C-terminus: MGKTLAEKIFSEHVGRDVKAGEIVLARVDIAMAQDGTGPLMINEFRELGFKEVKVPKAFLFIDHASPSPRKELSNSQKMMREFGKEMGVKVFDAGDGISHQILAEKYVKPGDLVAGADSHTCTAGGLGAFGTGMGSTDVAIIFGLGQNWFKVPETIKVVVNGKLQDGVYAKDIILEIARILGSDGATYKALEFHGSCIENMNVEDRLTISNMAVEVGAKAGLMPSDEKTREFLKKMGREEDFRELKADPDAVYETEIEIDATTLEPLVSLPHYVDNVRKVSEVEKEKIKIDQVFIGTCTNGRLQDLEIALKILEKHGKHPDVRLIVGPASRKVYMDALEKGIIKKFVELGAAVIPPGCGPCVGIHMGVLGDGERVLSTQNRNFKGRMGNPNAEIYLASPATAAATAVTGYITDPRRFI.

The [4Fe-4S] cluster site is built by C298, C358, and C361.

The protein belongs to the aconitase/IPM isomerase family. LeuC type 2 subfamily. As to quaternary structure, heterodimer of LeuC and LeuD. The cofactor is [4Fe-4S] cluster.

The catalysed reaction is (2R,3S)-3-isopropylmalate = (2S)-2-isopropylmalate. It participates in amino-acid biosynthesis; L-leucine biosynthesis; L-leucine from 3-methyl-2-oxobutanoate: step 2/4. Its function is as follows. Catalyzes the isomerization between 2-isopropylmalate and 3-isopropylmalate, via the formation of 2-isopropylmaleate. The polypeptide is 3-isopropylmalate dehydratase large subunit 1 (Thermotoga maritima (strain ATCC 43589 / DSM 3109 / JCM 10099 / NBRC 100826 / MSB8)).